The chain runs to 367 residues: DNA replication and repair protein RecF (367 aa).

30-37 (GANGSGKT) serves as a coordination point for ATP.

Belongs to the RecF family.

The protein resides in the cytoplasm. Functionally, the RecF protein is involved in DNA metabolism; it is required for DNA replication and normal SOS inducibility. RecF binds preferentially to single-stranded, linear DNA. It also seems to bind ATP. In Pseudomonas putida (strain ATCC 47054 / DSM 6125 / CFBP 8728 / NCIMB 11950 / KT2440), this protein is DNA replication and repair protein RecF.